The following is an 801-amino-acid chain: U-box domain-containing protein 44 (801 aa).

In terms of domain architecture, U-box spans 22 to 101; the sequence is HIYEAFICPL…EEWRSRNDAA (80 aa). ARM repeat units follow at residues 134–173, 176–215, 218–259, 261–300, 301–340, 342–386, 390–429, 435–475, and 480–521; these read RSNR…VVVE, DESK…ELSK, ALCE…NMER, EEIV…ELPL, NNDV…KISS, EGSA…NIVN, DFDK…GLTS, PKVV…NLSP, and ELAK…ELPD.

Interacts with AAO3. Binds to SD129. As to expression, expressed in leaves, root vasculature and guard cells.

The catalysed reaction is S-ubiquitinyl-[E2 ubiquitin-conjugating enzyme]-L-cysteine + [acceptor protein]-L-lysine = [E2 ubiquitin-conjugating enzyme]-L-cysteine + N(6)-ubiquitinyl-[acceptor protein]-L-lysine.. It participates in protein modification; protein ubiquitination. Its function is as follows. Functions as an E3 ubiquitin-protein ligase. Prevents premature senescence probably by targeting proteins involved in this process for degradation. Promotes the degradation of AAO3 and thus represses abscisic acid (ABA) biosynthesis. This Arabidopsis thaliana (Mouse-ear cress) protein is U-box domain-containing protein 44 (PUB44).